A 167-amino-acid chain; its full sequence is Small ribosomal subunit protein uS5 (167 aa).

The region spanning 12–75 is the S5 DRBM domain; it reads IEDRVVAINR…ETARKSLIEV (64 aa).

Belongs to the universal ribosomal protein uS5 family. As to quaternary structure, part of the 30S ribosomal subunit. Contacts proteins S4 and S8.

With S4 and S12 plays an important role in translational accuracy. Its function is as follows. Located at the back of the 30S subunit body where it stabilizes the conformation of the head with respect to the body. This Pediococcus pentosaceus (strain ATCC 25745 / CCUG 21536 / LMG 10740 / 183-1w) protein is Small ribosomal subunit protein uS5.